The chain runs to 452 residues: NADH-quinone oxidoreductase subunit N 2 (452 aa).

Helical transmembrane passes span Val-6 to Ile-26, Thr-33 to Gly-53, Thr-70 to Leu-90, Ser-97 to Ala-117, Leu-120 to Phe-140, Tyr-154 to Ala-174, Ile-194 to Phe-214, Phe-232 to Ile-252, Ile-258 to Leu-278, Met-286 to Glu-306, Ile-311 to Ile-331, Phe-355 to Val-375, Gly-387 to Leu-407, and Ala-432 to Phe-452.

This sequence belongs to the complex I subunit 2 family. NDH-1 is composed of 14 different subunits. Subunits NuoA, H, J, K, L, M, N constitute the membrane sector of the complex.

It is found in the cell inner membrane. It catalyses the reaction a quinone + NADH + 5 H(+)(in) = a quinol + NAD(+) + 4 H(+)(out). Functionally, NDH-1 shuttles electrons from NADH, via FMN and iron-sulfur (Fe-S) centers, to quinones in the respiratory chain. The immediate electron acceptor for the enzyme in this species is believed to be ubiquinone. Couples the redox reaction to proton translocation (for every two electrons transferred, four hydrogen ions are translocated across the cytoplasmic membrane), and thus conserves the redox energy in a proton gradient. This is NADH-quinone oxidoreductase subunit N 2 from Thermodesulfovibrio yellowstonii (strain ATCC 51303 / DSM 11347 / YP87).